A 908-amino-acid chain; its full sequence is Protein translocase subunit SecA (908 aa).

ATP-binding positions include Q87, 105 to 109 (GEGKT), and D512. The disordered stretch occupies residues 866-908 (GSDEDDAIAAHTPMIRDGDKVGRNDPCPCGSGRKYKQCHGKLS). The span at 879–888 (MIRDGDKVGR) shows a compositional bias: basic and acidic residues. Positions 892, 894, 903, and 904 each coordinate Zn(2+). Over residues 898–908 (RKYKQCHGKLS) the composition is skewed to basic residues.

It belongs to the SecA family. Monomer and homodimer. Part of the essential Sec protein translocation apparatus which comprises SecA, SecYEG and auxiliary proteins SecDF-YajC and YidC. Requires Zn(2+) as cofactor.

It is found in the cell inner membrane. The protein resides in the cytoplasm. It carries out the reaction ATP + H2O + cellular proteinSide 1 = ADP + phosphate + cellular proteinSide 2.. Part of the Sec protein translocase complex. Interacts with the SecYEG preprotein conducting channel. Has a central role in coupling the hydrolysis of ATP to the transfer of proteins into and across the cell membrane, serving both as a receptor for the preprotein-SecB complex and as an ATP-driven molecular motor driving the stepwise translocation of polypeptide chains across the membrane. The chain is Protein translocase subunit SecA from Shewanella oneidensis (strain ATCC 700550 / JCM 31522 / CIP 106686 / LMG 19005 / NCIMB 14063 / MR-1).